Reading from the N-terminus, the 411-residue chain is LL-diaminopimelate aminotransferase (411 aa).

Substrate contacts are provided by Tyr-15 and Gly-42. Pyridoxal 5'-phosphate contacts are provided by residues Tyr-72, 108-109, Tyr-132, Asn-187, Tyr-218, and 246-248; these read SK and SFS. The substrate site is built by Lys-109, Tyr-132, and Asn-187. An N6-(pyridoxal phosphate)lysine modification is found at Lys-249. Residues Arg-257 and Asn-292 each contribute to the pyridoxal 5'-phosphate site. Substrate-binding residues include Asn-292 and Arg-388.

It belongs to the class-I pyridoxal-phosphate-dependent aminotransferase family. LL-diaminopimelate aminotransferase subfamily. As to quaternary structure, homodimer. It depends on pyridoxal 5'-phosphate as a cofactor.

The catalysed reaction is (2S,6S)-2,6-diaminopimelate + 2-oxoglutarate = (S)-2,3,4,5-tetrahydrodipicolinate + L-glutamate + H2O + H(+). The protein operates within amino-acid biosynthesis; L-lysine biosynthesis via DAP pathway; LL-2,6-diaminopimelate from (S)-tetrahydrodipicolinate (aminotransferase route): step 1/1. In terms of biological role, involved in the synthesis of meso-diaminopimelate (m-DAP or DL-DAP), required for both lysine and peptidoglycan biosynthesis. Catalyzes the direct conversion of tetrahydrodipicolinate to LL-diaminopimelate. The chain is LL-diaminopimelate aminotransferase from Trichodesmium erythraeum (strain IMS101).